The primary structure comprises 160 residues: Transcription antitermination protein NusB (160 aa).

It belongs to the NusB family.

In terms of biological role, involved in transcription antitermination. Required for transcription of ribosomal RNA (rRNA) genes. Binds specifically to the boxA antiterminator sequence of the ribosomal RNA (rrn) operons. The protein is Transcription antitermination protein NusB of Nitrobacter hamburgensis (strain DSM 10229 / NCIMB 13809 / X14).